A 315-amino-acid chain; its full sequence is Glutamine synthetase nodule isozyme (315 aa).

Positions 19–99 constitute a GS beta-grasp domain; that stretch reads IIAEYIWVGG…VICDTYTPSG (81 aa). Residues 106-315 enclose the GS catalytic domain; that stretch reads KRHAAAKIFS…WGVANRGASI (210 aa).

The protein belongs to the glutamine synthetase family. As to quaternary structure, homooctamer.

It is found in the cytoplasm. It carries out the reaction L-glutamate + NH4(+) + ATP = L-glutamine + ADP + phosphate + H(+). The protein is Glutamine synthetase nodule isozyme of Lupinus angustifolius (Narrow-leaved blue lupine).